Consider the following 310-residue polypeptide: Choline trimethylamine-lyase activating enzyme (310 aa).

The region spanning 17–304 (YDGPGVRTLV…EACIRKYDFP (288 aa)) is the Radical SAM core domain. Cysteine 31, cysteine 35, cysteine 38, cysteine 57, cysteine 60, cysteine 63, and cysteine 99 together coordinate [4Fe-4S] cluster. Residue 37–39 (WCS) coordinates S-adenosyl-L-methionine. 2 4Fe-4S ferredoxin-type domains span residues 48 to 77 (YQVL…ISAS) and 79 to 109 (LRHG…VVGE). Residues glycine 139, 188-190 (DVK), and histidine 264 contribute to the S-adenosyl-L-methionine site.

Belongs to the organic radical-activating enzymes family. As to quaternary structure, monomer. It depends on [4Fe-4S] cluster as a cofactor.

The catalysed reaction is glycyl-[protein] + reduced [flavodoxin] + S-adenosyl-L-methionine = glycin-2-yl radical-[protein] + semiquinone [flavodoxin] + 5'-deoxyadenosine + L-methionine + H(+). It participates in amine and polyamine metabolism; choline degradation. In terms of biological role, catalyzes activation of the choline trimethylamine-lyase CutC under anaerobic conditions by generation of an organic free radical on a glycine residue, via a homolytic cleavage of S-adenosyl-L-methionine (SAM). Is involved in the anaerobic choline utilization pathway that allows D.alaskensis to grow on choline as a source of carbon and energy. This Oleidesulfovibrio alaskensis (strain ATCC BAA-1058 / DSM 17464 / G20) (Desulfovibrio alaskensis) protein is Choline trimethylamine-lyase activating enzyme.